We begin with the raw amino-acid sequence, 347 residues long: 3,4-dihydroxy-2-butanone 4-phosphate synthase (347 aa).

The segment at 1 to 200 is DHBP synthase; that stretch reads MPLNRVREAI…ISDLIEYRMQ (200 aa). Residues 27-28, D32, 139-143, and E163 each bind D-ribulose 5-phosphate; these read RE and RTGHT. A Mg(2+)-binding site is contributed by E28. Mg(2+) is bound at residue H142. Residues 201–347 form a GTP cyclohydrolase II-like region; that stretch reads NEMLILIKER…IVLQGGPIQL (147 aa).

It in the N-terminal section; belongs to the DHBP synthase family. In the C-terminal section; belongs to the GTP cyclohydrolase II family. Requires Mg(2+) as cofactor. The cofactor is Mn(2+).

It carries out the reaction D-ribulose 5-phosphate = (2S)-2-hydroxy-3-oxobutyl phosphate + formate + H(+). It functions in the pathway cofactor biosynthesis; riboflavin biosynthesis; 2-hydroxy-3-oxobutyl phosphate from D-ribulose 5-phosphate: step 1/1. Its function is as follows. Catalyzes the conversion of D-ribulose 5-phosphate to formate and 3,4-dihydroxy-2-butanone 4-phosphate. The protein is 3,4-dihydroxy-2-butanone 4-phosphate synthase (ribB) of Wolinella succinogenes (strain ATCC 29543 / DSM 1740 / CCUG 13145 / JCM 31913 / LMG 7466 / NCTC 11488 / FDC 602W) (Vibrio succinogenes).